Here is a 323-residue protein sequence, read N- to C-terminus: PTS system mannose-specific EIIAB component (323 aa).

A PTS EIIA type-4 domain is found at 2–124 (TIAIVIGTHG…VALAVETGRE (123 aa)). Residue His-10 is the Tele-phosphohistidine intermediate; for EIIA activity of the active site. His-10 bears the Phosphohistidine; by HPr mark. Lys-55 carries the post-translational modification N6-acetyllysine. Residues 137–155 (AAPAPAAAAPKAAPTPAKP) are hinge. Residues 157-320 (GPNDYMVIGL…KLKMMDLISK (164 aa)) enclose the PTS EIIB type-4 domain. His-175 acts as the Pros-phosphohistidine intermediate; for EIIB activity in catalysis. Phosphohistidine; by EIIA is present on His-175. Lys-234 is modified (N6-acetyllysine).

In terms of assembly, homodimer.

The protein resides in the cytoplasm. It localises to the cell inner membrane. It catalyses the reaction D-mannose(out) + N(pros)-phospho-L-histidyl-[protein] = D-mannose 6-phosphate(in) + L-histidyl-[protein]. Functionally, the phosphoenolpyruvate-dependent sugar phosphotransferase system (sugar PTS), a major carbohydrate active transport system, catalyzes the phosphorylation of incoming sugar substrates concomitantly with their translocation across the cell membrane. The enzyme II ManXYZ PTS system is involved in mannose transport. This is PTS system mannose-specific EIIAB component (manX) from Escherichia coli O157:H7.